We begin with the raw amino-acid sequence, 466 residues long: Glycine--tRNA ligase (466 aa).

Substrate-binding residues include Arg105 and Glu168. ATP contacts are provided by residues 200-202 (RNE), 210-215 (FRTREF), 287-288 (EL), and 331-334 (GLTR). 215–219 (FEQME) serves as a coordination point for substrate. Residue 327–331 (EPAAG) coordinates substrate.

The protein belongs to the class-II aminoacyl-tRNA synthetase family. In terms of assembly, homodimer.

It localises to the cytoplasm. It carries out the reaction tRNA(Gly) + glycine + ATP = glycyl-tRNA(Gly) + AMP + diphosphate. Functionally, catalyzes the attachment of glycine to tRNA(Gly). This Nocardia farcinica (strain IFM 10152) protein is Glycine--tRNA ligase.